We begin with the raw amino-acid sequence, 436 residues long: 3-ketoacyl-CoA thiolase (436 aa).

Cysteine 99 functions as the Acyl-thioester intermediate in the catalytic mechanism. Active-site proton acceptor residues include histidine 392 and cysteine 422.

It belongs to the thiolase-like superfamily. Thiolase family. In terms of assembly, heterotetramer of two alpha chains (FadJ) and two beta chains (FadI).

It localises to the cytoplasm. It carries out the reaction an acyl-CoA + acetyl-CoA = a 3-oxoacyl-CoA + CoA. Its pathway is lipid metabolism; fatty acid beta-oxidation. In terms of biological role, catalyzes the final step of fatty acid oxidation in which acetyl-CoA is released and the CoA ester of a fatty acid two carbons shorter is formed. In Shewanella sp. (strain ANA-3), this protein is 3-ketoacyl-CoA thiolase.